The following is a 140-amino-acid chain: Profilin (140 aa).

Serine 2 is subject to N-acetylserine.

The protein belongs to the profilin family. Occurs in many kinds of cells as a complex with monomeric actin in a 1:1 ratio.

It localises to the cytoplasm. Its subcellular location is the cytoskeleton. Functionally, binds to actin and affects the structure of the cytoskeleton. At high concentrations, profilin prevents the polymerization of actin, whereas it enhances it at low concentrations. By binding to PIP2, it inhibits the formation of IP3 and DG. The chain is Profilin from Clypeaster japonicus (Sand dollar).